The chain runs to 538 residues: Lipid scramblase CLPTM1L (538 aa).

The Cytoplasmic segment spans residues 1-10 (MWSGRSSFTS). The helical transmembrane segment at 11–31 (LVVGVFVVYVVHTCWVMYGIV) threads the bilayer. Residues 32–284 (YTRPCSGDAN…VKGIFVDTNL (253 aa)) are Extracellular-facing. N-linked (GlcNAc...) asparagine glycosylation is found at Asn91 and Asn101. A helical transmembrane segment spans residues 285–305 (YFLALTFFVAAFHLLFDFLAF). Residues 306–324 (KNDISFWKKKKSMIGMSTK) lie on the Cytoplasmic side of the membrane. The helical transmembrane segment at 325 to 342 (AVLWRCFSTVVIFLFLLD) threads the bilayer. Residues 343–346 (EQTS) are Extracellular-facing. A helical transmembrane segment spans residues 347-364 (LLVLVPAGVGAAIELWKV). The Cytoplasmic segment spans residues 365–402 (KKALKMTILWRGLMPEFELGTYSESERKTEEYDTQAMK). The helical transmembrane segment at 403 to 423 (YLSYLLYPLCVGGAVYSLLNI) threads the bilayer. Residues 424–428 (KYKSW) are Extracellular-facing. A helical transmembrane segment spans residues 429–449 (YSWLINSFVNGVYAFGFLFML). The Cytoplasmic portion of the chain corresponds to 450–538 (PQLFVNYKLK…EKAARAPHTD (89 aa)).

This sequence belongs to the CLPTM1 family.

Its subcellular location is the endoplasmic reticulum membrane. The enzyme catalyses a 6-(alpha-D-glucosaminyl)-1-(1,2-diacyl-sn-glycero-3-phospho)-1D-myo-inositol(in) = a 6-(alpha-D-glucosaminyl)-1-(1,2-diacyl-sn-glycero-3-phospho)-1D-myo-inositol(out). It carries out the reaction 6-(alpha-D-glucosaminyl)-(1-octadecanoyl,2-(9Z)-octadecenoyl-sn-glycero-3-phospho)-1D-myo-inositol(in) = 6-(alpha-D-glucosaminyl)-(1-octadecanoyl,2-(9Z)-octadecenoyl-sn-glycero-3-phospho)-1D-myo-inositol(out). It catalyses the reaction a 1,2-diacyl-sn-glycero-3-phospho-(1D-myo-inositol)(in) = a 1,2-diacyl-sn-glycero-3-phospho-(1D-myo-inositol)(out). The catalysed reaction is a 1,2-diacyl-sn-glycero-3-phosphocholine(in) = a 1,2-diacyl-sn-glycero-3-phosphocholine(out). The enzyme catalyses a 1,2-diacyl-sn-glycero-3-phosphoethanolamine(in) = a 1,2-diacyl-sn-glycero-3-phosphoethanolamine(out). Scramblase that mediates the translocation of glucosaminylphosphatidylinositol (alpha-D-GlcN-(1-6)-(1,2-diacyl-sn-glycero-3-phospho)-1D-myo-inositol, GlcN-PI) across the endoplasmic reticulum (ER) membrane, from the cytosolic leaflet to the luminal leaflet of the ER membrane, where it participates in the biosynthesis of glycosylphosphatidylinositol (GPI). GPI is a lipid glycoconjugate involved in post-translational modification of proteins. Can also translocate 1,2-diacyl-sn-glycero-3-phospho-(1D-myo-inositol) (phosphatidylinositol or PI), as well as several other phospholipids (1,2-diacyl-sn-glycero-3-phosphocholine, 1,2-diacyl-sn-glycero-3-phosphoethanolamine), and N-acetylglucosaminylphosphatidylinositol (GlcNAc-PI) in vitro. The chain is Lipid scramblase CLPTM1L (CLPTM1L) from Pongo abelii (Sumatran orangutan).